Consider the following 823-residue polypeptide: Polyadenylation and cleavage factor homolog 11 (823 aa).

The 133-residue stretch at 3-135 folds into the CID domain; it reads SVESAARDYR…ELDMKINKLD (133 aa). 5 disordered regions span residues 142-176, 188-301, 340-395, 570-643, and 728-755; these read NPQT…STST, SSTP…KTLK, SSAP…LPAP, LPAP…EKRS, and WLTP…VASS. 2 stretches are compositionally biased toward polar residues: residues 157 to 176 and 188 to 198; these read APSQ…STST and SSTPGAASASK. The span at 200-226 shows a compositional bias: basic and acidic residues; it reads VVEKTKSPGTVNKEKQVKKEPKQDPLD. Low complexity-rich tracts occupy residues 227-242 and 342-353; these read KLLP…SSPA and APPFQHPQQHHP. Pro residues predominate over residues 374 to 390; sequence PQDPAPIVPVQAPPPQQ. Low complexity predominate over residues 571–581; it reads PAPARSPSSPR. Over residues 609–624 the composition is skewed to polar residues; that stretch reads QPQQNARWGGANKQQN.

The chain is Polyadenylation and cleavage factor homolog 11 (pcf-11) from Caenorhabditis elegans.